The sequence spans 437 residues: Glucose-1-phosphate adenylyltransferase (437 aa).

Alpha-D-glucose 1-phosphate-binding positions include Tyr-113, Gly-179, 194–195 (EK), and Ser-212.

This sequence belongs to the bacterial/plant glucose-1-phosphate adenylyltransferase family. As to quaternary structure, homotetramer.

It catalyses the reaction alpha-D-glucose 1-phosphate + ATP + H(+) = ADP-alpha-D-glucose + diphosphate. Its pathway is glycan biosynthesis; glycogen biosynthesis. Involved in the biosynthesis of ADP-glucose, a building block required for the elongation reactions to produce glycogen. Catalyzes the reaction between ATP and alpha-D-glucose 1-phosphate (G1P) to produce pyrophosphate and ADP-Glc. The protein is Glucose-1-phosphate adenylyltransferase of Haemophilus influenzae (strain ATCC 51907 / DSM 11121 / KW20 / Rd).